The following is a 697-amino-acid chain: tRNA 5-methylaminomethyl-2-thiouridine biosynthesis bifunctional protein MnmC (697 aa).

The interval 1–272 (MPKPASMAMN…KREMLTAVMS (272 aa)) is tRNA (mnm(5)s(2)U34)-methyltransferase. Residues 300–697 (IGAGVAGLLT…HKHKTRQAVI (398 aa)) form an FAD-dependent cmnm(5)s(2)U34 oxidoreductase region.

In the N-terminal section; belongs to the methyltransferase superfamily. tRNA (mnm(5)s(2)U34)-methyltransferase family. The protein in the C-terminal section; belongs to the DAO family. FAD serves as cofactor.

Its subcellular location is the cytoplasm. It catalyses the reaction 5-aminomethyl-2-thiouridine(34) in tRNA + S-adenosyl-L-methionine = 5-methylaminomethyl-2-thiouridine(34) in tRNA + S-adenosyl-L-homocysteine + H(+). Functionally, catalyzes the last two steps in the biosynthesis of 5-methylaminomethyl-2-thiouridine (mnm(5)s(2)U) at the wobble position (U34) in tRNA. Catalyzes the FAD-dependent demodification of cmnm(5)s(2)U34 to nm(5)s(2)U34, followed by the transfer of a methyl group from S-adenosyl-L-methionine to nm(5)s(2)U34, to form mnm(5)s(2)U34. This is tRNA 5-methylaminomethyl-2-thiouridine biosynthesis bifunctional protein MnmC from Psychrobacter cryohalolentis (strain ATCC BAA-1226 / DSM 17306 / VKM B-2378 / K5).